Consider the following 346-residue polypeptide: N-acetyl-gamma-glutamyl-phosphate reductase (346 aa).

The active site involves Cys-150.

It belongs to the NAGSA dehydrogenase family. Type 1 subfamily.

It is found in the cytoplasm. The enzyme catalyses N-acetyl-L-glutamate 5-semialdehyde + phosphate + NADP(+) = N-acetyl-L-glutamyl 5-phosphate + NADPH + H(+). It functions in the pathway amino-acid biosynthesis; L-arginine biosynthesis; N(2)-acetyl-L-ornithine from L-glutamate: step 3/4. In terms of biological role, catalyzes the NADPH-dependent reduction of N-acetyl-5-glutamyl phosphate to yield N-acetyl-L-glutamate 5-semialdehyde. In Lachnoclostridium phytofermentans (strain ATCC 700394 / DSM 18823 / ISDg) (Clostridium phytofermentans), this protein is N-acetyl-gamma-glutamyl-phosphate reductase.